Here is a 410-residue protein sequence, read N- to C-terminus: Chloride intracellular channel protein 5 (410 aa).

A G-site motif is present at residues 191-194; it reads CPFS. Residues 193 to 213 traverse the membrane as a helical segment; the sequence is FSQRLFMILWLKGVVFNVTTV. The GST C-terminal domain occupies 260–400; sequence YPKLAAKHRE…AADSEIELAY (141 aa).

This sequence belongs to the chloride channel CLIC family. Component of a multimeric complex consisting of several cytoskeletal proteins, including actin, ezrin, alpha-actinin, gelsolin, and IQGAP1. Interacts with AKAP9. Interacts with TPRN. TPRN, CLIC5 and PTPQR form concentric rings at the base of stereocilia and may form a complex. Interacts with EZR, MYO6 and RDX; the proteins may work together as a complex to stabilize linkages between the plasma membrane and subjacent actin cytoskeleton at the stereocilium base. Widely expressed in both fetal and adult human tissues. Isoform 1 is expressed in renal glomeruli endothelial cells and podocytes (at protein level).

It is found in the cytoplasm. It localises to the cytoskeleton. Its subcellular location is the cell cortex. The protein localises to the membrane. The protein resides in the apical cell membrane. It is found in the mitochondrion. It localises to the cell projection. Its subcellular location is the stereocilium. The protein localises to the golgi apparatus. The protein resides in the microtubule organizing center. It is found in the centrosome. The enzyme catalyses chloride(in) = chloride(out). It catalyses the reaction Na(+)(in) = Na(+)(out). It carries out the reaction K(+)(in) = K(+)(out). Its activity is regulated as follows. Inhibited by F-actin. In the soluble state, catalyzes glutaredoxin-like thiol disulfide exchange reactions with reduced glutathione as electron donor. Can insert into membranes and form non-selective ion channels almost equally permeable to Na(+), K(+) and Cl(-). Required for normal hearing. It is necessary for the formation of stereocilia in the inner ear and normal development of the organ of Corti. May play a role in the regulation of transepithelial ion absorption and secretion. Is required for the development and/or maintenance of the proper glomerular endothelial cell and podocyte architecture. Plays a role in formation of the lens suture in the eye, which is important for normal optical properties of the lens. The polypeptide is Chloride intracellular channel protein 5 (Homo sapiens (Human)).